Reading from the N-terminus, the 85-residue chain is Toxin Cll7 (85 aa).

An N-terminal signal peptide occupies residues 1–19 (MNSLLMITACLVLFGTVWA). Residues 20–83 (KEGYLVNTYT…TWPLPNKTCG (64 aa)) form the LCN-type CS-alpha/beta domain. 4 cysteine pairs are disulfide-bonded: Cys31/Cys82, Cys35/Cys58, Cys44/Cys63, and Cys48/Cys65.

Belongs to the long (4 C-C) scorpion toxin superfamily. Sodium channel inhibitor family. Beta subfamily. In terms of tissue distribution, expressed by the venom gland.

It localises to the secreted. Functionally, beta toxins bind voltage-independently at site-4 of sodium channels (Nav) and shift the voltage of activation toward more negative potentials thereby affecting sodium channel activation and promoting spontaneous and repetitive firing. The chain is Toxin Cll7 from Centruroides limpidus (Mexican scorpion).